A 205-amino-acid polypeptide reads, in one-letter code: Large ribosomal subunit protein uL4 (205 aa).

The interval 43 to 95 (RSGNRAQKDRAEVKHSTKKPWRQKGTGRARAGMTSSPLWRGGGRAFPNSPEEN) is disordered. Over residues 48–57 (AQKDRAEVKH) the composition is skewed to basic and acidic residues. A compositionally biased stretch (basic residues) spans 58-69 (STKKPWRQKGTG).

Belongs to the universal ribosomal protein uL4 family. As to quaternary structure, part of the 50S ribosomal subunit.

Functionally, one of the primary rRNA binding proteins, this protein initially binds near the 5'-end of the 23S rRNA. It is important during the early stages of 50S assembly. It makes multiple contacts with different domains of the 23S rRNA in the assembled 50S subunit and ribosome. In terms of biological role, forms part of the polypeptide exit tunnel. This is Large ribosomal subunit protein uL4 from Bordetella bronchiseptica (strain ATCC BAA-588 / NCTC 13252 / RB50) (Alcaligenes bronchisepticus).